The chain runs to 309 residues: 2-dehydro-3-deoxygluconokinase (309 aa).

Substrate-binding positions include 28–32 (GDTLN), Tyr88, 102–104 (YWR), and Arg170. Residues 168-170 (NYR), 228-233 (KRGADS), and 261-264 (AAGD) contribute to the ATP site. Asp264 provides a ligand contact to substrate. Asp264 serves as the catalytic Proton acceptor.

The protein belongs to the carbohydrate kinase pfkB family.

The catalysed reaction is 2-dehydro-3-deoxy-D-gluconate + ATP = 2-dehydro-3-deoxy-6-phospho-D-gluconate + ADP + H(+). It functions in the pathway carbohydrate acid metabolism; 2-dehydro-3-deoxy-D-gluconate degradation; D-glyceraldehyde 3-phosphate and pyruvate from 2-dehydro-3-deoxy-D-gluconate: step 1/2. Catalyzes the phosphorylation of 2-keto-3-deoxygluconate (KDG) to produce 2-keto-3-deoxy-6-phosphogluconate (KDPG). This Escherichia coli (strain ATCC 9637 / CCM 2024 / DSM 1116 / LMG 11080 / NBRC 13500 / NCIMB 8666 / NRRL B-766 / W) protein is 2-dehydro-3-deoxygluconokinase (kdgK).